The following is a 642-amino-acid chain: 1-deoxy-D-xylulose-5-phosphate synthase 2 (642 aa).

Thiamine diphosphate-binding positions include H73 and 113 to 115 (SHA). Mg(2+) is bound at residue D144. Residues 145-146 (GA), N174, Y285, and E366 each bind thiamine diphosphate. Residue N174 coordinates Mg(2+).

The protein belongs to the transketolase family. DXPS subfamily. Homodimer. Requires Mg(2+) as cofactor. Thiamine diphosphate serves as cofactor.

It carries out the reaction D-glyceraldehyde 3-phosphate + pyruvate + H(+) = 1-deoxy-D-xylulose 5-phosphate + CO2. It participates in metabolic intermediate biosynthesis; 1-deoxy-D-xylulose 5-phosphate biosynthesis; 1-deoxy-D-xylulose 5-phosphate from D-glyceraldehyde 3-phosphate and pyruvate: step 1/1. Functionally, catalyzes the acyloin condensation reaction between C atoms 2 and 3 of pyruvate and glyceraldehyde 3-phosphate to yield 1-deoxy-D-xylulose-5-phosphate (DXP). The polypeptide is 1-deoxy-D-xylulose-5-phosphate synthase 2 (Streptomyces coelicolor (strain ATCC BAA-471 / A3(2) / M145)).